A 3511-amino-acid chain; its full sequence is Unconventional myosin-XV (3511 aa).

Disordered stretches follow at residues 1 to 44 (MADE…TPKI), 574 to 690 (KKPI…SLRQ), 712 to 1030 (FAEP…PNKN), and 1105 to 1135 (VSSF…PQAC). The span at 622-634 (SQPQARNNNNSHG) shows a compositional bias: polar residues. Residues 654-672 (PPMPAPSPSPASPLTPPFS) show a composition bias toward pro residues. A compositionally biased stretch (low complexity) spans 769-792 (PSLRSLPGQGYHSPLGPLSPQLSL). The segment covering 797–807 (FQPPFPPPPRR) has biased composition (pro residues). A Myosin motor domain is found at 1206–1883 (DGVEDMTQLE…LHQLLESMRE (678 aa)). An ATP-binding site is contributed by 1299–1306 (GESGSGKT). Positions 1307–1334 (EATKLILRCLAAMNQRRDVMQQIKILEA) form a coiled coil. The interval 1776-1783 (FVRCLKPN) is actin-binding. Residues 1872–2013 (EHLHQLLESM…SSGPRVAVVR (142 aa)) are neck or regulatory domain. 2 consecutive IQ domains span residues 1886-1908 (QNRA…HFRS) and 1909-1938 (LRRK…SLLK). Residues 2014-3511 (APRLQAEPCV…TLPPSEITLL (1498 aa)) are tail. The MyTH4 1 domain occupies 2049–2195 (MLTVPLKMPL…PTQLEWTAIQ (147 aa)). Disordered regions lie at residues 2330–2359 (SHKE…GEST), 2392–2425 (YRMK…PIPG), 2460–2509 (PLSA…SVAK), 2565–2584 (KQPP…GKVF), and 2629–2648 (RPCM…PPED). The span at 2337–2351 (NGETEAQRWTSNRQA) shows a compositional bias: polar residues. The segment covering 2395–2406 (KGGGQPGGGGGS) has biased composition (gly residues). Over residues 2410-2420 (DTSRRPPEPKL) the composition is skewed to basic and acidic residues. Basic and acidic residues predominate over residues 2573–2584 (PEARRTDGGKVF). The SH3 domain occupies 2848–2934 (KDSDYVVAVR…PSELVQPAAA (87 aa)). The segment at 2964–2984 (EVGRRREGPPVRARSADSGED) is disordered. The segment covering 2965 to 2980 (VGRRREGPPVRARSAD) has biased composition (basic and acidic residues). Residues 3031–3185 (FTKVPIQESL…PSNMELRAML (155 aa)) enclose the MyTH4 2 domain. Positions 3190–3511 (SKRQLFLLPG…TLPPSEITLL (322 aa)) constitute an FERM domain.

The protein belongs to the TRAFAC class myosin-kinesin ATPase superfamily. Myosin family. As to quaternary structure, interacts with the third PDZ domain of WHRN which is necessary for localization of WHRN to stereocilium tips. Interacts with FASLG. Interacts with EPS8. As to expression, in the developing inner ear, expressed in cochlea and vestibular apparatus. Expression appears to be restricted to cochlear neurosensory cells and upper epithelial layer of macula saccula. Also expressed in macula utriculi and cristae ampullaris of the semicircular canals. In adult cochlear hair cells, highest expression in stereocilia and apical body.

Its subcellular location is the cell projection. The protein resides in the stereocilium. The protein localises to the cytoplasm. It is found in the cytoskeleton. Functionally, myosins are actin-based motor molecules with ATPase activity. Unconventional myosins serve in intracellular movements. Their highly divergent tails are presumed to bind to membranous compartments, which would be moved relative to actin filaments. Required for the arrangement of stereocilia in mature hair bundles. This chain is Unconventional myosin-XV (Myo15a), found in Mus musculus (Mouse).